The chain runs to 184 residues: Photosystem I assembly protein Ycf4 (184 aa).

2 helical membrane passes run 19 to 39 (ISNF…LLVG) and 57 to 77 (IIFF…LFIS).

It belongs to the Ycf4 family.

Its subcellular location is the plastid. It is found in the chloroplast thylakoid membrane. Functionally, seems to be required for the assembly of the photosystem I complex. The polypeptide is Photosystem I assembly protein Ycf4 (Drimys granadensis).